The chain runs to 95 residues: Selenoprotein K (95 aa).

A helical transmembrane segment spans residues Leu20–Ile42. A disordered region spans residues Thr47–Arg95. Position 93 (Sec93) is a non-standard amino acid, selenocysteine.

Belongs to the selenoprotein K family.

Its subcellular location is the endoplasmic reticulum membrane. The protein resides in the cell membrane. Functionally, required for Ca(2+) flux in immune cells and plays a role in T-cell proliferation and in T-cell and neutrophil migration. Involved in endoplasmic reticulum-associated degradation (ERAD) of soluble glycosylated proteins. Required for cell surface expression of CD36 and involved in macrophage uptake of low-density lipoprotein and in foam cell formation. Required for palmitoylation. This is Selenoprotein K (selenok) from Xenopus laevis (African clawed frog).